The chain runs to 437 residues: UDP-sugar transporter protein SLC35A5 (437 aa).

The Cytoplasmic portion of the chain corresponds to 1–21; it reads MKVIFLRQLKTRGMERKCSRR. The helical transmembrane segment at 22–42 threads the bilayer; the sequence is PGLGPPTLYTFLLGIIFITLS. Residues 43–65 are Lumenal-facing; the sequence is SSRILLVKYSANEENKYDYLPTT. The helical transmembrane segment at 66 to 86 threads the bilayer; the sequence is VNVCSELMKLILCILVSLCVI. At 87 to 106 the chain is on the cytoplasmic side; the sequence is KKEDHQSRHLRCTSWKEFSS. Residues 107 to 129 traverse the membrane as a helical segment; that stretch reads FMKWSIPAFLYFLDNLIVFYVLS. Topologically, residues 130–132 are lumenal; sequence YLQ. The chain crosses the membrane as a helical span at residues 133–155; sequence PAMAVIFSNFSIITTALLFRIVL. Residues 156-158 lie on the Cytoplasmic side of the membrane; sequence KRH. Residues 159–179 traverse the membrane as a helical segment; it reads LNWIQWASLLILFLSIVALTA. The Lumenal portion of the chain corresponds to 180–241; the sequence is STKTSQHELA…TTARVFSHIR (62 aa). Asn217 is a glycosylation site (N-linked (GlcNAc...) asparagine). A helical transmembrane segment spans residues 242-262; sequence LGLGHVLIIVQCFISSMANIY. Residues 263-276 are Cytoplasmic-facing; that stretch reads NEKILKEGTQLTES. The helical transmembrane segment at 277–297 threads the bilayer; the sequence is IFIQNSKLYFFGIVFNGLTLV. Over 298 to 316 the chain is Lumenal; the sequence is LQSSNRDQIQNCGFFYGHN. A helical transmembrane segment spans residues 317–337; it reads AFSVVLIFVTAFQGLSVAFIL. The Cytoplasmic segment spans residues 338 to 343; sequence KFLDNM. The helical transmembrane segment at 344–364 threads the bilayer; it reads FHVLMAQVTTVIITTVSVLVF. Topologically, residues 365–367 are lumenal; the sequence is DFR. The chain crosses the membrane as a helical span at residues 368-388; sequence PSLDFFLEAPSVLLSIFIYNA. The Cytoplasmic portion of the chain corresponds to 389–437; sequence SKPQNLECAPKQERIRHLSGSLWERSSGDGEELERLTKLKSDDSDDDTL. Phosphoserine is present on residues Ser407, Ser429, and Ser432. The interval 412–437 is disordered; it reads ERSSGDGEELERLTKLKSDDSDDDTL. The span at 421 to 430 shows a compositional bias: basic and acidic residues; the sequence is LERLTKLKSD.

Belongs to the nucleotide-sugar transporter family. SLC35A subfamily. As to quaternary structure, probably forms homooligomers and heterooligomers with SLC35A1, SLC35A2, SLC35A3 and SLC35A4.

It is found in the golgi apparatus membrane. It carries out the reaction UMP(out) + UDP-alpha-D-glucuronate(in) = UMP(in) + UDP-alpha-D-glucuronate(out). The catalysed reaction is UMP(out) + UDP-N-acetyl-alpha-D-glucosamine(in) = UMP(in) + UDP-N-acetyl-alpha-D-glucosamine(out). It catalyses the reaction UDP-N-acetyl-alpha-D-galactosamine(in) + UMP(out) = UDP-N-acetyl-alpha-D-galactosamine(out) + UMP(in). Its function is as follows. Probable UDP-sugar:UMP transmembrane antiporter involved in UDP-alpha-D-glucuronate/UDP-GlcA, UDP-GlcNAc/UDP-N-acetyl-alpha-D-glucosamine and UDP-N-acetyl-alpha-D-galactosamine/UDP-GalNAc transport from the cytosol to the lumen of the Golgi. The sequence is that of UDP-sugar transporter protein SLC35A5 from Mus musculus (Mouse).